A 224-amino-acid polypeptide reads, in one-letter code: Metalloproteinase inhibitor 4 (224 aa).

The first 29 residues, 1–29, serve as a signal peptide directing secretion; that stretch reads MPWSPLAALSWALVLRLLALLWPPGRGEA. Zn(2+) is bound at residue cysteine 30. Involved in metalloproteinase-binding stretches follow at residues 30–33 and 99–100; these read CSCA and SS. 6 disulfides stabilise this stretch: cysteine 30–cysteine 102, cysteine 32–cysteine 131, cysteine 42–cysteine 156, cysteine 158–cysteine 205, cysteine 163–cysteine 168, and cysteine 176–cysteine 197. The NTR domain maps to 30-156; that stretch reads CSCAPAHPQQ…SLNHHYHQNC (127 aa).

It belongs to the protease inhibitor I35 (TIMP) family. In terms of tissue distribution, expressed in retina, smooth muscle, skin, pancreas, skeletal muscle, heart, brain, lung, kidney and testis. Not found in cartilage, spleen and liver.

The protein resides in the secreted. Its function is as follows. Complexes with metalloproteinases (such as collagenases) and irreversibly inactivates them by binding to their catalytic zinc cofactor. This chain is Metalloproteinase inhibitor 4 (Timp4), found in Rattus norvegicus (Rat).